The following is a 373-amino-acid chain: 3 beta-hydroxysteroid dehydrogenase/Delta 5--&gt;4-isomerase type 1 (373 aa).

NADP(+)-binding positions include 10–15 (GAGGFL), Tyr-155, and Lys-159. Residue Lys-159 is the Proton donor of the active site. Residues 288–308 (LSLMYWIGFLLEIVSFLLRPI) form a helical membrane-spanning segment.

This sequence belongs to the 3-beta-HSD family. In terms of tissue distribution, placenta and skin. Predominantly expressed in mammary gland tissue.

Its subcellular location is the endoplasmic reticulum membrane. The protein resides in the mitochondrion membrane. The catalysed reaction is a 3beta-hydroxy-Delta(5)-steroid + NAD(+) = a 3-oxo-Delta(5)-steroid + NADH + H(+). It carries out the reaction pregnenolone + NAD(+) = pregn-5-ene-3,20-dione + NADH + H(+). The enzyme catalyses 3beta-hydroxyandrost-5-en-17-one + NAD(+) = androst-5-ene-3,17-dione + NADH + H(+). It catalyses the reaction androst-5-en-3beta,17beta-diol + NAD(+) = 17beta-hydroxy-androst-5-en-3-one + NADH + H(+). The catalysed reaction is a 3beta-hydroxysteroid + NADP(+) = a 3-oxosteroid + NADPH + H(+). It carries out the reaction 5alpha-androstane-3beta,17beta-diol + NADP(+) = 17beta-hydroxy-5alpha-androstan-3-one + NADPH + H(+). The enzyme catalyses 3beta-hydroxy-5alpha-androstan-17-one + NADP(+) = 5alpha-androstan-3,17-dione + NADPH + H(+). It catalyses the reaction a 3-oxo-Delta(5)-steroid = a 3-oxo-Delta(4)-steroid. The catalysed reaction is pregn-5-ene-3,20-dione = progesterone. It carries out the reaction androst-5-ene-3,17-dione = androst-4-ene-3,17-dione. The enzyme catalyses 17beta-hydroxy-androst-5-en-3-one = testosterone. It catalyses the reaction 5alpha-androstane-3beta,17beta-diol + NAD(+) = 17beta-hydroxy-5alpha-androstan-3-one + NADH + H(+). It participates in steroid hormone biosynthesis. The protein operates within steroid metabolism. Its function is as follows. A bifunctional enzyme responsible for the oxidation and isomerization of 3beta-hydroxy-Delta(5)-steroid precursors to 3-oxo-Delta(4)-steroids, an essential step in steroid hormone biosynthesis. Specifically catalyzes the conversion of pregnenolone to progesterone, 17alpha-hydroxypregnenolone to 17alpha-hydroxyprogesterone, dehydroepiandrosterone (DHEA) to 4-androstenedione, and androstenediol to testosterone. Additionally, catalyzes the interconversion between 3beta-hydroxy and 3-oxo-5alpha-androstane steroids controlling the bioavalability of the active forms. Specifically converts dihydrotestosterone to its inactive form 5alpha-androstanediol, that does not bind androgen receptor/AR. Also converts androstanedione, a precursor of testosterone and estrone, to epiandrosterone. Expected to use NAD(+) as preferred electron donor for the 3beta-hydroxy-steroid dehydrogenase activity and NADPH for the 3-ketosteroid reductase activity. The sequence is that of 3 beta-hydroxysteroid dehydrogenase/Delta 5--&gt;4-isomerase type 1 from Homo sapiens (Human).